A 337-amino-acid polypeptide reads, in one-letter code: D-alanine--D-alanine ligase (337 aa).

The ATP-grasp domain maps to 124 to 330 (KMWFSALGIP…FTEYLSLVIN (207 aa)). Residue 154 to 209 (ALAQWGSIFVKAASQGSSVGCYKVDDSAKVAGVLKDAFGYAPYVIVEKTIKARELE) coordinates ATP. Mg(2+) is bound by residues Asp-284, Glu-297, and Asn-299.

Belongs to the D-alanine--D-alanine ligase family. Mg(2+) serves as cofactor. Requires Mn(2+) as cofactor.

The protein resides in the cytoplasm. It carries out the reaction 2 D-alanine + ATP = D-alanyl-D-alanine + ADP + phosphate + H(+). Its pathway is cell wall biogenesis; peptidoglycan biosynthesis. Functionally, cell wall formation. The chain is D-alanine--D-alanine ligase from Shewanella baltica (strain OS223).